The sequence spans 219 residues: Large ribosomal subunit protein uL16 (219 aa).

This sequence belongs to the universal ribosomal protein uL16 family. In terms of assembly, component of the large ribosomal subunit. Mature ribosomes consist of a small (40S) and a large (60S) subunit. The 40S subunit contains about 33 different proteins and 1 molecule of RNA (18S). The 60S subunit contains about 49 different proteins and 3 molecules of RNA (28S, 5.8S and 5S).

This Bombyx mandarina (Wild silk moth) protein is Large ribosomal subunit protein uL16 (RpL10).